A 194-amino-acid chain; its full sequence is DPY30 domain-containing protein 2 (194 aa).

Positions 126–172 (EAFEKEPLKQESLPGTSDMIPGMPQQSPSSEPSVSSQVDLNTGTPQE) are disordered. The segment covering 149 to 163 (PQQSPSSEPSVSSQV) has biased composition (low complexity).

The protein belongs to the dpy-30 family.

This Bos taurus (Bovine) protein is DPY30 domain-containing protein 2 (DYDC2).